Reading from the N-terminus, the 654-residue chain is Meiotically up-regulated gene 24 protein (654 aa).

One can recognise an RRM 1 domain in the interval Arg299–Ser355. The segment at Ser383 to Lys404 is disordered. The segment covering Cys384–Thr393 has biased composition (polar residues). Residues Thr394–Lys404 are compositionally biased toward basic and acidic residues. RRM domains are found at residues Arg409 to Glu482 and Arg500 to Asp571.

It localises to the cytoplasm. Functionally, has a role in meiosis. The sequence is that of Meiotically up-regulated gene 24 protein (mug24) from Schizosaccharomyces pombe (strain 972 / ATCC 24843) (Fission yeast).